A 405-amino-acid polypeptide reads, in one-letter code: Palmitoyltransferase PFA5 (405 aa).

The next 5 helical transmembrane spans lie at 12-32 (YIKLLVPICVVLVLAYLNYAI), 51-71 (IILWVLLGFFQLELLVYWVLI), 154-174 (LFFMKFMMGFLAFFIIVLIYC), 191-211 (FIVLFVMSGFWIIMIGCLFGI), and 310-330 (FYTLWRLAAAFVVFIIPFIDI). A DHHC domain is found at 111 to 161 (YYCSNSNSIKLERSFFSKDVGYNVIKFDHYCIWIGQPIGQDNYLFFMKFMM).

Belongs to the DHHC palmitoyltransferase family. PFA5 subfamily. In terms of processing, autopalmitoylated.

Its subcellular location is the membrane. The enzyme catalyses L-cysteinyl-[protein] + hexadecanoyl-CoA = S-hexadecanoyl-L-cysteinyl-[protein] + CoA. This is Palmitoyltransferase PFA5 (PFA5) from Candida albicans (strain SC5314 / ATCC MYA-2876) (Yeast).